We begin with the raw amino-acid sequence, 479 residues long: BRAP2 RING ZnF UBP domain-containing protein 2 (479 aa).

An RING-type; atypical zinc finger spans residues Cys-167–Arg-207. The UBP-type; degenerate zinc-finger motif lies at Ser-201–Gly-294. 8 residues coordinate Zn(2+): Cys-218, Cys-221, Cys-230, Cys-233, Cys-238, His-245, His-249, and His-255. A coiled-coil region spans residues Asn-328–Val-442. The interval Ala-434–Gly-479 is disordered. The segment covering Ala-451–Val-466 has biased composition (low complexity). Positions Ala-469–Gly-479 are enriched in basic residues.

As to quaternary structure, component of the heteromeric E3 ligase complex made of BRIZ1 and BRIZ2. Forms heterooligomers with BRIZ1 via coiled-coil domains.

The catalysed reaction is S-ubiquitinyl-[E2 ubiquitin-conjugating enzyme]-L-cysteine + [acceptor protein]-L-lysine = [E2 ubiquitin-conjugating enzyme]-L-cysteine + N(6)-ubiquitinyl-[acceptor protein]-L-lysine.. Its pathway is protein modification; protein ubiquitination. Functionally, RING-type ubiquitin E3 ligase that binds ubiquitin and is required for seed germination and post-germination growth. This is BRAP2 RING ZnF UBP domain-containing protein 2 from Arabidopsis thaliana (Mouse-ear cress).